We begin with the raw amino-acid sequence, 181 residues long: TATA-box-binding protein C (181 aa).

Repeat copies occupy residues 5–83 (IANI…LGML) and 99–177 (VENV…QSKV).

It belongs to the TBP family.

General factor that plays a role in the activation of archaeal genes transcribed by RNA polymerase. Binds specifically to the TATA box promoter element which lies close to the position of transcription initiation. The polypeptide is TATA-box-binding protein C (tbpC1) (Halobacterium salinarum (strain ATCC 700922 / JCM 11081 / NRC-1) (Halobacterium halobium)).